We begin with the raw amino-acid sequence, 75 residues long: U6-lycotoxin-Ls1d (75 aa).

Residues 1-21 form the signal peptide; sequence MKLLFFTALVLVVISLIEVEA. Residues 22–25 constitute a propeptide that is removed on maturation; the sequence is ENER.

It belongs to the neurotoxin 19 (CSTX) family. 06 (U6-Lctx) subfamily. Post-translationally, contains 4 disulfide bonds. As to expression, expressed by the venom gland.

Its subcellular location is the secreted. In Lycosa singoriensis (Wolf spider), this protein is U6-lycotoxin-Ls1d.